The sequence spans 271 residues: Tryptophan synthase alpha chain (271 aa).

Catalysis depends on proton acceptor residues Glu53 and Asp64.

It belongs to the TrpA family. In terms of assembly, tetramer of two alpha and two beta chains.

It carries out the reaction (1S,2R)-1-C-(indol-3-yl)glycerol 3-phosphate + L-serine = D-glyceraldehyde 3-phosphate + L-tryptophan + H2O. The protein operates within amino-acid biosynthesis; L-tryptophan biosynthesis; L-tryptophan from chorismate: step 5/5. Its function is as follows. The alpha subunit is responsible for the aldol cleavage of indoleglycerol phosphate to indole and glyceraldehyde 3-phosphate. The protein is Tryptophan synthase alpha chain of Streptomyces coelicolor (strain ATCC BAA-471 / A3(2) / M145).